The primary structure comprises 859 residues: Active breakpoint cluster region-related protein (859 aa).

Residues 26–84 are disordered; sequence TDEYDGEGNEEQKGPPEGSETMPYIDESPTMSPQLSARSQGGGDGVSPTPPEGLAPGVE. A compositionally biased stretch (polar residues) spans 54–64; it reads PTMSPQLSARS. A Phosphoserine modification is found at serine 57. One can recognise a DH domain in the interval 91-284; the sequence is MRKLVLSGFL…QNFLSSINED (194 aa). The region spanning 301 to 459 is the PH domain; sequence QLVKDGFLVE…WREAIQKLQK (159 aa). In terms of domain architecture, C2 spans 484–613; sequence TVHNIPVTSN…ETKNWHTDVI (130 aa). The region spanning 647-845 is the Rho-GAP domain; that stretch reads VKISVVTKRE…YYLQHPPISF (199 aa).

As to quaternary structure, interacts with DLG4. Highly enriched in the brain. Much weaker expression in heart, lung and muscle.

It is found in the cell projection. The protein resides in the dendritic spine. Its subcellular location is the axon. The protein localises to the synapse. Functionally, protein with a unique structure having two opposing regulatory activities toward small GTP-binding proteins. The C-terminus is a GTPase-activating protein domain which stimulates GTP hydrolysis by RAC1, RAC2 and CDC42. Accelerates the intrinsic rate of GTP hydrolysis of RAC1 or CDC42, leading to down-regulation of the active GTP-bound form. The central Dbl homology (DH) domain functions as a guanine nucleotide exchange factor (GEF) that modulates the GTPases CDC42, RHOA and RAC1. Promotes the conversion of CDC42, RHOA and RAC1 from the GDP-bound to the GTP-bound form. Functions as an important negative regulator of neuronal RAC1 activity. Regulates macrophage functions such as CSF-1 directed motility and phagocytosis through the modulation of RAC1 activity. The polypeptide is Active breakpoint cluster region-related protein (Homo sapiens (Human)).